Reading from the N-terminus, the 150-residue chain is Ribosomal RNA large subunit methyltransferase H (150 aa).

Residues Ala100 and 118-123 contribute to the S-adenosyl-L-methionine site; that span reads LSEMTF.

It belongs to the RNA methyltransferase RlmH family. Homodimer.

It localises to the cytoplasm. It catalyses the reaction pseudouridine(1915) in 23S rRNA + S-adenosyl-L-methionine = N(3)-methylpseudouridine(1915) in 23S rRNA + S-adenosyl-L-homocysteine + H(+). In terms of biological role, specifically methylates the pseudouridine at position 1915 (m3Psi1915) in 23S rRNA. The protein is Ribosomal RNA large subunit methyltransferase H of Helicobacter pylori (strain J99 / ATCC 700824) (Campylobacter pylori J99).